The sequence spans 644 residues: Protein FAM149B1 (644 aa).

Disordered stretches follow at residues 392–490 (NQSD…NTLL), 551–575 (TFRS…RPGR), and 609–644 (GHFP…RPGL). A compositionally biased stretch (basic and acidic residues) spans 395–404 (DCRDSEDKVS). Positions 449–459 (PITSSVTQPIT) are enriched in polar residues. Residues 626 to 644 (QARSHNRGGSTARSSRPGL) show a composition bias toward polar residues.

This sequence belongs to the FAM149 family.

This chain is Protein FAM149B1 (fam149b1), found in Danio rerio (Zebrafish).